We begin with the raw amino-acid sequence, 84 residues long: Putative membrane protein insertion efficiency factor (84 aa).

It belongs to the UPF0161 family.

Its subcellular location is the cell inner membrane. Could be involved in insertion of integral membrane proteins into the membrane. The polypeptide is Putative membrane protein insertion efficiency factor (Shewanella sp. (strain ANA-3)).